We begin with the raw amino-acid sequence, 132 residues long: Small ribosomal subunit protein uS8 (132 aa).

It belongs to the universal ribosomal protein uS8 family. In terms of assembly, part of the 30S ribosomal subunit. Contacts proteins S5 and S12.

Functionally, one of the primary rRNA binding proteins, it binds directly to 16S rRNA central domain where it helps coordinate assembly of the platform of the 30S subunit. The polypeptide is Small ribosomal subunit protein uS8 (Xanthomonas euvesicatoria pv. vesicatoria (strain 85-10) (Xanthomonas campestris pv. vesicatoria)).